Reading from the N-terminus, the 327-residue chain is 2-keto-3-deoxygluconate permease (327 aa).

10 helical membrane passes run 10-30, 42-62, 73-93, 95-115, 139-159, 163-183, 199-219, 224-244, 254-274, and 289-309; these read IPGGMMLVPLFLGALCHTFSP, GMITGTVPILAVWFFCMGASI, KSGTLVVTKIAVAWVVAAIAS, IIPEHGVEVGFFAGLSTLALV, AGAFVLMSLESGPLMTMIILG, IASFEPHVFVGAVLPFLVGFA, VQTLIPFFAFALGNTIDLTVI, LLGILLGVAVIIVTGIPLIIA, TAGIAASSSAGAAVATPVLIA, and SLVATAVIVTSILVPILTSIW.

This sequence belongs to the KdgT transporter family.

It localises to the cell inner membrane. It carries out the reaction 2-dehydro-3-deoxy-D-gluconate(in) + H(+)(in) = 2-dehydro-3-deoxy-D-gluconate(out) + H(+)(out). Catalyzes the proton-dependent uptake of 2-keto-3-deoxygluconate (KDG) into the cell. This Escherichia coli O157:H7 protein is 2-keto-3-deoxygluconate permease.